The chain runs to 175 residues: Clathrin-associated protein AP-3 complex component APS3 (175 aa).

Belongs to the adaptor complexes small subunit family. As to quaternary structure, adaptor protein complex 3 (AP-3) is a heterotetramer composed of 2 large adaptins, a medium adaptin and a small adaptin.

The protein resides in the golgi apparatus. Its subcellular location is the cytoplasmic vesicle membrane. Its function is as follows. Part of the AP-3 complex, an adapter-related complex which is not clathrin-associated. The complex is associated with the Golgi region as well as more peripheral structures. It facilitates the budding of vesicles from the Golgi membrane. Involved in vacuolar trafficking and contributes to hyphal growth and pathogenesis. The protein is Clathrin-associated protein AP-3 complex component APS3 (APS3) of Candida albicans (strain SC5314 / ATCC MYA-2876) (Yeast).